We begin with the raw amino-acid sequence, 487 residues long: Cytochrome P450 2C5 (487 aa).

Cysteine 432 is a heme binding site.

It belongs to the cytochrome P450 family. Heme serves as cofactor.

The protein resides in the endoplasmic reticulum membrane. It is found in the microsome membrane. It carries out the reaction an organic molecule + reduced [NADPH--hemoprotein reductase] + O2 = an alcohol + oxidized [NADPH--hemoprotein reductase] + H2O + H(+). In terms of biological role, cytochromes P450 are a group of heme-thiolate monooxygenases. In liver microsomes, this enzyme is involved in an NADPH-dependent electron transport pathway. It oxidizes a variety of structurally unrelated compounds, including steroids, fatty acids, and xenobiotics. The chain is Cytochrome P450 2C5 (CYP2C5) from Oryctolagus cuniculus (Rabbit).